The primary structure comprises 528 residues: MEEKSQVQLDSHIFNTTSSSSQYYPLNVMISRSIKGWRPEPGYPFKCGIEIHTQLKTKHKLFSLSKNSPGAAPNTCASYFDFGLPGTIPKLNPEALLLALRAAVALKSDISSISSFDRKHYFYMDQPLGYQITQHYQPLAKNGHLSLVPRLDDVEEAKTIHVEQIQLEQDTAKLNYNAYDGTVDIDHNRANVPLIEMVTKPDFSHLSELRAFVKKYISLMTHLGVCSGDMENGALRCDVNVSVAGGNRVEIKNLGSTSEIIAAAKYEYARQVQLLKHGKTPVEQETRSWDGTKTIRTRSKEDAIDYRYFPDVELPRIRLHPSIGKDLSQTLPELPEQLIQQLCEEPFLLEVKHARFLVENPDLYNYYKNLHHIIVDKHKLSYKVVNNWIIHEFIGAFNKLDIPVDVSVIDTEKLASLIIMVSEKKISITSAKLLLTQILQSPEDRELSIPDLIDAYDLGAVNDIHGDDLKEAIKEVCSEVIDSHPDVVTKIRNGKTKSINFLIGRAMKETQGKVDSKEFEKMFKKLIG.

The protein belongs to the GatB/GatE family. GatB subfamily. As to quaternary structure, subunit of the heterotrimeric GatFAB amidotransferase (AdT) complex, composed of A, B and F subunits.

Its subcellular location is the mitochondrion. The catalysed reaction is L-glutamyl-tRNA(Gln) + L-glutamine + ATP + H2O = L-glutaminyl-tRNA(Gln) + L-glutamate + ADP + phosphate + H(+). Its function is as follows. Allows the formation of correctly charged Gln-tRNA(Gln) through the transamidation of misacylated Glu-tRNA(Gln) in the mitochondria. The reaction takes place in the presence of glutamine and ATP through an activated gamma-phospho-Glu-tRNA(Gln). This Clavispora lusitaniae (strain ATCC 42720) (Yeast) protein is Glutamyl-tRNA(Gln) amidotransferase subunit B, mitochondrial.